Here is an 86-residue protein sequence, read N- to C-terminus: Small ribosomal subunit protein bS16 (86 aa).

The protein belongs to the bacterial ribosomal protein bS16 family.

In Borrelia garinii subsp. bavariensis (strain ATCC BAA-2496 / DSM 23469 / PBi) (Borreliella bavariensis), this protein is Small ribosomal subunit protein bS16.